The sequence spans 155 residues: Ribonuclease H (155 aa).

The region spanning 4–145 (TEPTVYAYTD…ADRLANRGID (142 aa)) is the RNase H type-1 domain. Residues Asp-13, Glu-51, Asp-73, and Asp-137 each coordinate Mg(2+).

This sequence belongs to the RNase H family. Monomer. Requires Mg(2+) as cofactor.

The protein localises to the cytoplasm. The enzyme catalyses Endonucleolytic cleavage to 5'-phosphomonoester.. In terms of biological role, endonuclease that specifically degrades the RNA of RNA-DNA hybrids. The protein is Ribonuclease H of Methylococcus capsulatus (strain ATCC 33009 / NCIMB 11132 / Bath).